Reading from the N-terminus, the 90-residue chain is Small ribosomal subunit protein uS15 (90 aa).

The protein belongs to the universal ribosomal protein uS15 family. In terms of assembly, part of the 30S ribosomal subunit. Forms a bridge to the 50S subunit in the 70S ribosome, contacting the 23S rRNA.

One of the primary rRNA binding proteins, it binds directly to 16S rRNA where it helps nucleate assembly of the platform of the 30S subunit by binding and bridging several RNA helices of the 16S rRNA. Its function is as follows. Forms an intersubunit bridge (bridge B4) with the 23S rRNA of the 50S subunit in the ribosome. In Campylobacter hominis (strain ATCC BAA-381 / DSM 21671 / CCUG 45161 / LMG 19568 / NCTC 13146 / CH001A), this protein is Small ribosomal subunit protein uS15.